The following is a 209-amino-acid chain: Large ribosomal subunit protein uL3 (209 aa).

The interval 133-153 is disordered; sequence THGNSLSHRVPGSIGQNQTPG. N5-methylglutamine is present on Q150.

The protein belongs to the universal ribosomal protein uL3 family. In terms of assembly, part of the 50S ribosomal subunit. Forms a cluster with proteins L14 and L19. In terms of processing, methylated by PrmB.

Functionally, one of the primary rRNA binding proteins, it binds directly near the 3'-end of the 23S rRNA, where it nucleates assembly of the 50S subunit. This chain is Large ribosomal subunit protein uL3, found in Serratia proteamaculans (strain 568).